Reading from the N-terminus, the 147-residue chain is Peptide deformylase (147 aa).

Positions 88 and 130 each coordinate Fe cation. Residue Glu-131 is part of the active site. His-134 contributes to the Fe cation binding site.

This sequence belongs to the polypeptide deformylase family. It depends on Fe(2+) as a cofactor.

The enzyme catalyses N-terminal N-formyl-L-methionyl-[peptide] + H2O = N-terminal L-methionyl-[peptide] + formate. Its function is as follows. Removes the formyl group from the N-terminal Met of newly synthesized proteins. Requires at least a dipeptide for an efficient rate of reaction. N-terminal L-methionine is a prerequisite for activity but the enzyme has broad specificity at other positions. The chain is Peptide deformylase from Alkaliphilus metalliredigens (strain QYMF).